We begin with the raw amino-acid sequence, 578 residues long: Acyl-coenzyme A synthetase ACSM5, mitochondrial (578 aa).

The transit peptide at 1–22 directs the protein to the mitochondrion; that stretch reads MRLWLRGLVYQARRSSWGVFRI. At lysine 96 the chain carries N6-acetyllysine; alternate. An N6-succinyllysine; alternate modification is found at lysine 96. At lysine 151 the chain carries N6-acetyllysine. ATP is bound at residue 229 to 237; that stretch reads TSGTTGTPK. Lysine 335 is modified (N6-acetyllysine). Residues 367 to 372, aspartate 454, arginine 469, and lysine 565 each bind ATP; that span reads EGYGQS.

This sequence belongs to the ATP-dependent AMP-binding enzyme family. The cofactor is Mg(2+). Requires Mn(2+) as cofactor.

It localises to the mitochondrion matrix. The catalysed reaction is a medium-chain fatty acid + ATP + CoA = a medium-chain fatty acyl-CoA + AMP + diphosphate. Catalyzes the activation of fatty acids by CoA to produce an acyl-CoA, the first step in fatty acid metabolism. In Rattus norvegicus (Rat), this protein is Acyl-coenzyme A synthetase ACSM5, mitochondrial (Acsm5).